The primary structure comprises 345 residues: Putative pyridoxal reductase (345 aa).

Y60 functions as the Proton donor in the catalytic mechanism.

Belongs to the aldo/keto reductase family.

It is found in the cytoplasm. The protein resides in the nucleus. The catalysed reaction is pyridoxine + NADP(+) = pyridoxal + NADPH + H(+). It participates in cofactor degradation; B6 vitamer degradation; pyridoxal from pyridoxine (dehydrogenase route): step 1/1. In terms of biological role, catalyzes the reduction of pyridoxal (PL) with NADPH and oxidation of pyridoxine (PN) with NADP(+). This Saccharomyces cerevisiae (strain ATCC 204508 / S288c) (Baker's yeast) protein is Putative pyridoxal reductase.